The following is a 173-amino-acid chain: Photosystem I assembly protein Ycf3 (173 aa).

3 TPR repeats span residues 35–68, 72–105, and 120–153; these read AYIY…EENP, GETL…NPKQ, and GRSA…YPGG.

It belongs to the Ycf3 family.

It localises to the cellular thylakoid membrane. In terms of biological role, essential for the assembly of the photosystem I (PSI) complex. May act as a chaperone-like factor to guide the assembly of the PSI subunits. This chain is Photosystem I assembly protein Ycf3, found in Prochlorococcus marinus (strain MIT 9211).